A 306-amino-acid polypeptide reads, in one-letter code: Protoheme IX farnesyltransferase (306 aa).

The next 9 membrane-spanning stretches (helical) occupy residues 32–52, 57–77, 108–128, 129–149, 157–177, 183–203, 230–250, 252–272, and 285–305; these read VVQLIVFCAFIGMVLAVPGMP, WALMAVASAGIWLVAGAAAAF, LLFSALLCAAGSALLYWWVNP, LTMWLTFATFVGYAVIYTVIL, IVIGGASGAMPPVLGWAAMTG, ALILFLIIFLWTPPHFWALAL, VFLYTLILFAGCLMPFVYGMS, WIYLAAAVVLSAGFCLYGFRL, and FRFSLIHLSLLFAALLVDHYL.

The protein belongs to the UbiA prenyltransferase family. Protoheme IX farnesyltransferase subfamily.

The protein resides in the cell inner membrane. It carries out the reaction heme b + (2E,6E)-farnesyl diphosphate + H2O = Fe(II)-heme o + diphosphate. It functions in the pathway porphyrin-containing compound metabolism; heme O biosynthesis; heme O from protoheme: step 1/1. Converts heme B (protoheme IX) to heme O by substitution of the vinyl group on carbon 2 of heme B porphyrin ring with a hydroxyethyl farnesyl side group. This chain is Protoheme IX farnesyltransferase, found in Acidovorax ebreus (strain TPSY) (Diaphorobacter sp. (strain TPSY)).